The following is a 308-amino-acid chain: Ribosomal RNA small subunit methyltransferase H (308 aa).

S-adenosyl-L-methionine-binding positions include 38–40 (GGH), aspartate 58, phenylalanine 82, aspartate 99, and glutamine 106.

It belongs to the methyltransferase superfamily. RsmH family.

The protein resides in the cytoplasm. The catalysed reaction is cytidine(1402) in 16S rRNA + S-adenosyl-L-methionine = N(4)-methylcytidine(1402) in 16S rRNA + S-adenosyl-L-homocysteine + H(+). Functionally, specifically methylates the N4 position of cytidine in position 1402 (C1402) of 16S rRNA. The chain is Ribosomal RNA small subunit methyltransferase H from Acidovorax sp. (strain JS42).